We begin with the raw amino-acid sequence, 113 residues long: Ribosome-associated factor Y (113 aa).

Lysine 66 carries the N6-acetyllysine modification. The segment at 91 to 113 is disordered; sequence KGEARRAATSVKDANFVEEVEEE.

Belongs to the HPF/YfiA ribosome-associated protein family. YfiA subfamily. Associates mainly with 70S ribosomes.

Functionally, during stationary phase, prevents 70S dimer formation, probably in order to regulate translation efficiency during transition between the exponential and the stationary phases. In addition, during environmental stress such as cold shock or excessive cell density at stationary phase, stabilizes the 70S ribosome against dissociation, inhibits translation initiation and increase translation accuracy. When normal growth conditions are restored, is quickly released from the ribosome. This chain is Ribosome-associated factor Y, found in Escherichia coli O157:H7.